We begin with the raw amino-acid sequence, 462 residues long: Tubulin alpha-4 chain (462 aa).

GTP is bound by residues Q11, E82, S151, G155, T156, T190, N217, and N239. E82 lines the Mg(2+) pocket. E265 is an active-site residue.

This sequence belongs to the tubulin family. As to quaternary structure, dimer of alpha and beta chains. A typical microtubule is a hollow water-filled tube with an outer diameter of 25 nm and an inner diameter of 15 nM. Alpha-beta heterodimers associate head-to-tail to form protofilaments running lengthwise along the microtubule wall with the beta-tubulin subunit facing the microtubule plus end conferring a structural polarity. Microtubules usually have 13 protofilaments but different protofilament numbers can be found in some organisms and specialized cells. Mg(2+) serves as cofactor.

The protein localises to the cytoplasm. It localises to the cytoskeleton. The enzyme catalyses GTP + H2O = GDP + phosphate + H(+). Tubulin is the major constituent of microtubules, a cylinder consisting of laterally associated linear protofilaments composed of alpha- and beta-tubulin heterodimers. Microtubules grow by the addition of GTP-tubulin dimers to the microtubule end, where a stabilizing cap forms. Below the cap, tubulin dimers are in GDP-bound state, owing to GTPase activity of alpha-tubulin. This is Tubulin alpha-4 chain (alphaTub67C) from Drosophila melanogaster (Fruit fly).